A 484-amino-acid chain; its full sequence is Ribonuclease Y (484 aa).

A helical transmembrane segment spans residues 18–38 (FFAFLFLIIIAFNLCLFAYLY). A KH domain is found at 166 to 234 (SPSFLISESD…LTVRNILMND (69 aa)). An HD domain is found at 293-385 (VLSHSLETAF…TQIADKLSAA (93 aa)).

The protein belongs to the RNase Y family.

It is found in the cell membrane. In terms of biological role, endoribonuclease that initiates mRNA decay. The sequence is that of Ribonuclease Y from Mycoplasma genitalium (strain ATCC 33530 / DSM 19775 / NCTC 10195 / G37) (Mycoplasmoides genitalium).